We begin with the raw amino-acid sequence, 124 residues long: MADLKDFAEQLVNLTVKEVNELADILKEEYGIEPAAAAVAVAGGGAAGGEEAEEQTEFDVILTAPGGSKLAVVKLVKELTGLGLKDAKALVDEAPKPVKEGVAKDEAEALKAQLEEAGAEVELK.

The protein belongs to the bacterial ribosomal protein bL12 family. Homodimer. Part of the ribosomal stalk of the 50S ribosomal subunit. Forms a multimeric L10(L12)X complex, where L10 forms an elongated spine to which 2 to 4 L12 dimers bind in a sequential fashion. Binds GTP-bound translation factors.

In terms of biological role, forms part of the ribosomal stalk which helps the ribosome interact with GTP-bound translation factors. Is thus essential for accurate translation. This chain is Large ribosomal subunit protein bL12, found in Christiangramia forsetii (strain DSM 17595 / CGMCC 1.15422 / KT0803) (Gramella forsetii).